Reading from the N-terminus, the 478-residue chain is Growth/differentiation factor 10 (478 aa).

A signal peptide spans 1–33 (MAHVPARTSPGPGPQLLLLLLPLFLLLLRDVAG). Residues 34–368 (SHRAPAWSAL…EKTMQKARRK (335 aa)) constitute a propeptide that is removed on maturation. Asn118, Asn156, and Asn281 each carry an N-linked (GlcNAc...) asparagine glycan. Residues 266-319 (YDPFPAGDPEPRAAPNNSADPRVRRAAQATGPLQDNELPGLDERPPRAHAQHFH) form a disordered region. Intrachain disulfides connect Cys376–Cys443, Cys405–Cys475, and Cys409–Cys477. Asn469 carries an N-linked (GlcNAc...) asparagine glycan.

The protein belongs to the TGF-beta family. As to quaternary structure, homodimer or heterodimer. Can form a non-covalent complex of the mature region and the pro-region. In terms of tissue distribution, expressed in femur, brain, lung, skeletal muscle, pancreas and testis.

Its subcellular location is the secreted. Growth factor involved in osteogenesis and adipogenesis. Plays an inhibitory role in the process of osteoblast differentiation via SMAD2/3 pathway. Plays an inhibitory role in the process of adipogenesis. This chain is Growth/differentiation factor 10, found in Homo sapiens (Human).